A 567-amino-acid polypeptide reads, in one-letter code: 2-succinyl-5-enolpyruvyl-6-hydroxy-3-cyclohexene-1-carboxylate synthase (567 aa).

Belongs to the TPP enzyme family. MenD subfamily. As to quaternary structure, homodimer. Mg(2+) serves as cofactor. The cofactor is Mn(2+). Requires thiamine diphosphate as cofactor.

It catalyses the reaction isochorismate + 2-oxoglutarate + H(+) = 5-enolpyruvoyl-6-hydroxy-2-succinyl-cyclohex-3-ene-1-carboxylate + CO2. Its pathway is quinol/quinone metabolism; 1,4-dihydroxy-2-naphthoate biosynthesis; 1,4-dihydroxy-2-naphthoate from chorismate: step 2/7. It functions in the pathway quinol/quinone metabolism; menaquinone biosynthesis. In terms of biological role, catalyzes the thiamine diphosphate-dependent decarboxylation of 2-oxoglutarate and the subsequent addition of the resulting succinic semialdehyde-thiamine pyrophosphate anion to isochorismate to yield 2-succinyl-5-enolpyruvyl-6-hydroxy-3-cyclohexene-1-carboxylate (SEPHCHC). This Yersinia pestis bv. Antiqua (strain Antiqua) protein is 2-succinyl-5-enolpyruvyl-6-hydroxy-3-cyclohexene-1-carboxylate synthase.